The sequence spans 185 residues: Homeobox expressed in ES cells 1 (185 aa).

The homeobox DNA-binding region spans 108–167 (GRRPRTAFTQNQIEVLENVFRVNCYPGIDIREDLAQKLNLEEDRIQIWFQNRRAKLKRSH).

This sequence belongs to the ANF homeobox family. In terms of assembly, can form heterodimers with PROP1 in binding to DNA. Interacts with TLE1.

Its subcellular location is the nucleus. In terms of biological role, required for the normal development of the forebrain, eyes and other anterior structures such as the olfactory placodes and pituitary gland. Possible transcriptional repressor. Binds to the palindromic PIII sequence, 5'-AGCTTGAGTCTAATTGAATTAACTGTAC-3'. HESX1 and PROP1 bind as heterodimers on this palindromic site, and, in vitro, HESX1 can antagonize PROP1 activation. This is Homeobox expressed in ES cells 1 (HESX1) from Pan paniscus (Pygmy chimpanzee).